Consider the following 225-residue polypeptide: Phosphatidylserine decarboxylase proenzyme (225 aa).

Ser182 functions as the Schiff-base intermediate with substrate; via pyruvic acid in the catalytic mechanism. Ser182 carries the pyruvic acid (Ser); by autocatalysis modification.

This sequence belongs to the phosphatidylserine decarboxylase family. PSD-A subfamily. Heterodimer of a large membrane-associated beta subunit and a small pyruvoyl-containing alpha subunit. Pyruvate serves as cofactor. Is synthesized initially as an inactive proenzyme. Formation of the active enzyme involves a self-maturation process in which the active site pyruvoyl group is generated from an internal serine residue via an autocatalytic post-translational modification. Two non-identical subunits are generated from the proenzyme in this reaction, and the pyruvate is formed at the N-terminus of the alpha chain, which is derived from the carboxyl end of the proenzyme. The post-translation cleavage follows an unusual pathway, termed non-hydrolytic serinolysis, in which the side chain hydroxyl group of the serine supplies its oxygen atom to form the C-terminus of the beta chain, while the remainder of the serine residue undergoes an oxidative deamination to produce ammonia and the pyruvoyl prosthetic group on the alpha chain.

Its subcellular location is the cell membrane. The enzyme catalyses a 1,2-diacyl-sn-glycero-3-phospho-L-serine + H(+) = a 1,2-diacyl-sn-glycero-3-phosphoethanolamine + CO2. It participates in phospholipid metabolism; phosphatidylethanolamine biosynthesis; phosphatidylethanolamine from CDP-diacylglycerol: step 2/2. Functionally, catalyzes the formation of phosphatidylethanolamine (PtdEtn) from phosphatidylserine (PtdSer). The chain is Phosphatidylserine decarboxylase proenzyme from Neorickettsia sennetsu (strain ATCC VR-367 / Miyayama) (Ehrlichia sennetsu).